The sequence spans 276 residues: Acyl-[acyl-carrier-protein]--UDP-N-acetylglucosamine O-acyltransferase (276 aa).

It belongs to the transferase hexapeptide repeat family. LpxA subfamily. As to quaternary structure, homotrimer.

The protein resides in the cytoplasm. It carries out the reaction a (3R)-hydroxyacyl-[ACP] + UDP-N-acetyl-alpha-D-glucosamine = a UDP-3-O-[(3R)-3-hydroxyacyl]-N-acetyl-alpha-D-glucosamine + holo-[ACP]. Its pathway is glycolipid biosynthesis; lipid IV(A) biosynthesis; lipid IV(A) from (3R)-3-hydroxytetradecanoyl-[acyl-carrier-protein] and UDP-N-acetyl-alpha-D-glucosamine: step 1/6. Involved in the biosynthesis of lipid A, a phosphorylated glycolipid that anchors the lipopolysaccharide to the outer membrane of the cell. In Gloeothece citriformis (strain PCC 7424) (Cyanothece sp. (strain PCC 7424)), this protein is Acyl-[acyl-carrier-protein]--UDP-N-acetylglucosamine O-acyltransferase.